Consider the following 145-residue polypeptide: Arginine repressor (145 aa).

Belongs to the ArgR family.

It is found in the cytoplasm. It functions in the pathway amino-acid biosynthesis; L-arginine biosynthesis [regulation]. In terms of biological role, regulates arginine biosynthesis genes. This is Arginine repressor from Streptococcus mutans serotype c (strain ATCC 700610 / UA159).